The sequence spans 227 residues: MPEIRQLSEGIFEVTKDKKQLSTLNLDPGKVVYGEKLISVEGDEYRTWDPRRSKLGAMVLKKFDIPLKRNSKVLYLGAASGTTVSHVSDIVSEGAVYSVEFAPRSMRDFIGLASRRKNIFPILADAGKPDSYAHIVEPVDVIFQDVAQPNQAEIAARNAVRFLKKDGYLLLSIKARSIDTAASPKEIFKEEVKKLEQAFEPGFEVLTARELMPYHEDHLGVMARLKK.

S-adenosyl-L-methionine contacts are provided by residues threonine 82 to threonine 83, glutamate 100 to phenylalanine 101, aspartate 125 to alanine 126, and aspartate 145 to glutamine 148.

It belongs to the methyltransferase superfamily. Fibrillarin family. Interacts with nop5. Component of box C/D small ribonucleoprotein (sRNP) particles that contain rpl7ae, FlpA and nop5, plus a guide RNA.

In terms of biological role, involved in pre-rRNA and tRNA processing. Utilizes the methyl donor S-adenosyl-L-methionine to catalyze the site-specific 2'-hydroxyl methylation of ribose moieties in rRNA and tRNA. Site specificity is provided by a guide RNA that base pairs with the substrate. Methylation occurs at a characteristic distance from the sequence involved in base pairing with the guide RNA. The protein is Fibrillarin-like rRNA/tRNA 2'-O-methyltransferase of Methanosarcina mazei (strain ATCC BAA-159 / DSM 3647 / Goe1 / Go1 / JCM 11833 / OCM 88) (Methanosarcina frisia).